The primary structure comprises 588 residues: Pescadillo homolog (588 aa).

Positions Met1–Val54 are required for 28S ribosomal RNA processing. A sufficient for nucleolar localization region spans residues Met1–Glu257. Lys98 carries the post-translational modification N6-acetyllysine. Positions Glu294 to Arg314 are disordered. The segment at Met306–Ser415 is sufficient for interaction with MAP1B. Residues Lys322 to Ser415 form the BRCT domain. The tract at residues Gly448–Thr515 is disordered. A compositionally biased stretch (acidic residues) spans Glu456–Ala486. A compositionally biased stretch (basic and acidic residues) spans Gly487–Lys508. Lys517 is covalently cross-linked (Glycyl lysine isopeptide (Lys-Gly) (interchain with G-Cter in SUMO1); alternate). Residue Lys517 forms a Glycyl lysine isopeptide (Lys-Gly) (interchain with G-Cter in SUMO2); alternate linkage. The interval Met539–Glu588 is required for 28S ribosomal RNA processing. The tract at residues Leu565–Glu588 is disordered.

It belongs to the pescadillo family. Component of the PeBoW complex, composed of BOP1, PES1 and WDR12. The complex is held together by BOP1, which interacts with PES1 via its N-terminal domain and with WDR12 via a high-affinity interaction between the seven-bladed beta-propeller domains of the 2 proteins. The PeBoW complex associates with the 66S pre-ribosome. The PeBoW complex also associates with DDX27, PES1 interacts directly with DDX27. Interacts with IRS1 and UBTF. May interact with MAP1B. Sumoylated. Significant levels are detected in a variety of cancer cell lines, including glioblastoma, breast carcinoma, colon carcinoma and cervical carcinoma cells. Levels are abnormally elevated in malignant tumors of astrocytic origin.

Its subcellular location is the nucleus. It is found in the nucleolus. The protein resides in the nucleoplasm. It localises to the chromosome. Its function is as follows. Component of the PeBoW complex, which is required for maturation of 28S and 5.8S ribosomal RNAs and formation of the 60S ribosome. The protein is Pescadillo homolog of Homo sapiens (Human).